The chain runs to 284 residues: NAD kinase (284 aa).

Asp60 serves as the catalytic Proton acceptor. NAD(+) contacts are provided by residues 60–61 (DG), 134–135 (ND), Lys145, Arg162, Asp164, and Gln235.

This sequence belongs to the NAD kinase family. The cofactor is a divalent metal cation.

It localises to the cytoplasm. It carries out the reaction NAD(+) + ATP = ADP + NADP(+) + H(+). Involved in the regulation of the intracellular balance of NAD and NADP, and is a key enzyme in the biosynthesis of NADP. Catalyzes specifically the phosphorylation on 2'-hydroxyl of the adenosine moiety of NAD to yield NADP. The protein is NAD kinase of Treponema denticola (strain ATCC 35405 / DSM 14222 / CIP 103919 / JCM 8153 / KCTC 15104).